A 419-amino-acid polypeptide reads, in one-letter code: Probable serine/threonine-protein kinase CST (419 aa).

The N-myristoyl glycine moiety is linked to residue glycine 2. Cysteine 4 carries S-palmitoyl cysteine lipidation. Residues 8–48 (FSSSSPSKTGLHSHATTNNHSNGTEFSSTTGATTNSSVGQQ) form a disordered region. The segment covering 15-48 (KTGLHSHATTNNHSNGTEFSSTTGATTNSSVGQQ) has biased composition (polar residues). In terms of domain architecture, Protein kinase spans 86-368 (FKPDSMLGQG…KEVVEVLEHI (283 aa)). 92–100 (LGQGGFGKV) serves as a coordination point for ATP. Phosphoserine is present on serine 117. An ATP-binding site is contributed by lysine 124. Position 169 is a phosphotyrosine (tyrosine 169). The active-site Proton acceptor is the aspartate 218. Position 222 is a phosphoserine (serine 222). Threonine 253 and threonine 258 each carry phosphothreonine. Tyrosine 266 is modified (phosphotyrosine). The span at 378-390 (SSTKQAVANSSRS) shows a compositional bias: polar residues. Residues 378-419 (SSTKQAVANSSRSSPHHYRYKAGALGAERKRATPGRFGSVEK) are disordered.

Belongs to the protein kinase superfamily. Ser/Thr protein kinase family. In terms of assembly, interacts with SOBIR1/EVR and RLK5/HAE. Post-translationally, autophosphorylated on serine, threonine and tyrosine residues.

Its subcellular location is the cell membrane. It is found in the nucleus. It carries out the reaction L-seryl-[protein] + ATP = O-phospho-L-seryl-[protein] + ADP + H(+). It catalyses the reaction L-threonyl-[protein] + ATP = O-phospho-L-threonyl-[protein] + ADP + H(+). Functionally, acts as a spatial inhibitor of signaling that modulates abscission zone cell adhesion and expansion. Acts both directly and indirectly by physically interacting with RLK5/HAE and SOBIR1/EVR at the cell surface. The chain is Probable serine/threonine-protein kinase CST from Arabidopsis thaliana (Mouse-ear cress).